We begin with the raw amino-acid sequence, 687 residues long: Acetyl-coenzyme A synthetase 2 (687 aa).

CoA contacts are provided by residues 206 to 209 (RGGK) and T325. Residues 401–403 (GEP), 425–430 (DTMWQT), D516, and R531 each bind ATP. S539 is a binding site for CoA. R542 provides a ligand contact to ATP. R617 serves as a coordination point for CoA.

The protein belongs to the ATP-dependent AMP-binding enzyme family.

The catalysed reaction is acetate + ATP + CoA = acetyl-CoA + AMP + diphosphate. The polypeptide is Acetyl-coenzyme A synthetase 2 (ACS2) (Eremothecium gossypii (strain ATCC 10895 / CBS 109.51 / FGSC 9923 / NRRL Y-1056) (Yeast)).